The chain runs to 328 residues: MVKLAIDMMGGDDAPGIVLEAVEKAVNDFKDLEIILFGDSSQCTLEHDRVEVRHCTESITMDDEPVRAIKRKKDSSMARMAEAVKSGEADGCVSAGNTGALMSAGLFIVGRIKGVERPALVVTLPTVSGKGFVFMDVGANADAKAEHLLQYAQLGNIYAQKIRGIAEPSVCLLNIGTEAAKGNSLTKKAYRLMEDQHDFNFTGNVEAKGLMNDVADVVVTDGYTGNMILKNLEGVAKAMGKMFKSTLLSSFKNKMAALILRKDLNGLMTKMDYAEYGGSVLLGLNGTVVKAHGSSSAKAFYSAIRQAKIAGEQEIVKTMKETVGTENE.

This sequence belongs to the PlsX family. In terms of assembly, homodimer. Probably interacts with PlsY.

Its subcellular location is the cytoplasm. It carries out the reaction a fatty acyl-[ACP] + phosphate = an acyl phosphate + holo-[ACP]. The protein operates within lipid metabolism; phospholipid metabolism. Catalyzes the reversible formation of acyl-phosphate (acyl-PO(4)) from acyl-[acyl-carrier-protein] (acyl-ACP). This enzyme utilizes acyl-ACP as fatty acyl donor, but not acyl-CoA. This is Phosphate acyltransferase from Staphylococcus saprophyticus subsp. saprophyticus (strain ATCC 15305 / DSM 20229 / NCIMB 8711 / NCTC 7292 / S-41).